Consider the following 1128-residue polypeptide: Cordon-bleu protein-like 1 (1128 aa).

Positions 1-35 are disordered; sequence MDGRTPRPQDAPARRKPKAKAPLPPAETKYTDVSS. At T139 the chain carries Phosphothreonine. Phosphoserine occurs at positions 204, 222, and 256. Disordered regions lie at residues 249-309, 325-441, and 454-499; these read KKRD…VPQD, MSVD…SPKS, and TLKN…TSNG. A Phosphothreonine modification is found at T260. Polar residues predominate over residues 270–286; it reads FTRSNTISKPYISNTLP. S273 is modified (phosphoserine). At T284 the chain carries Phosphothreonine. Residues 291–296 carry the KKRRAP 1 motif; sequence KKRRAP. Residues S326, S333, S344, and S356 each carry the phosphoserine modification. Polar residues predominate over residues 345–357; it reads LQLSSMSAGNSSL. The KKRRAP 2 signature appears at 360 to 365; the sequence is TKRKAP. A compositionally biased stretch (polar residues) spans 397–415; the sequence is SEANSPEELSSPAGISSDY. Residues 416–425 show a composition bias toward acidic residues; that stretch reads SLEEIDEKEE. Phosphoserine occurs at positions 438, 441, 461, 471, and 474. A compositionally biased stretch (basic and acidic residues) spans 475 to 488; it reads MEEKQETKSTDGQE. A phosphoserine mark is found at S563, S584, S786, S813, S814, and S821. 4 disordered regions span residues 780-840, 882-964, 995-1081, and 1103-1128; these read TEDS…PFAP, SAAA…SQVS, RSQS…PEQM, and IPSNTISVNGRSRLSHSMSPDAQDGH. The segment covering 899–908 has biased composition (basic and acidic residues); it reads LTNKEAERDM. Phosphoserine occurs at positions 911, 917, 947, 1069, and 1070. 2 stretches are compositionally biased toward polar residues: residues 1045–1081 and 1103–1122; these read SAHNEQNSQIPTPTDGPSFTVMRQSSLTFQSSDPEQM and IPSNTISVNGRSRLSHSMSP. A WH2 domain is found at 1081 to 1101; the sequence is MRQSLLTAIRSGEAAAKLKRV. Position 1121 is a phosphoserine (S1121).

The polypeptide is Cordon-bleu protein-like 1 (Homo sapiens (Human)).